The chain runs to 122 residues: Large ribosomal subunit protein uL14 (122 aa).

This sequence belongs to the universal ribosomal protein uL14 family. As to quaternary structure, part of the 50S ribosomal subunit. Forms a cluster with proteins L3 and L19. In the 70S ribosome, L14 and L19 interact and together make contacts with the 16S rRNA in bridges B5 and B8.

In terms of biological role, binds to 23S rRNA. Forms part of two intersubunit bridges in the 70S ribosome. The polypeptide is Large ribosomal subunit protein uL14 (Levilactobacillus brevis (strain ATCC 367 / BCRC 12310 / CIP 105137 / JCM 1170 / LMG 11437 / NCIMB 947 / NCTC 947) (Lactobacillus brevis)).